The chain runs to 255 residues: tRNA (guanine-N(7)-)-methyltransferase (255 aa).

Residues 1-37 are disordered; that stretch reads MTAAASDPHNPRSSADDTASPRCESGQGSFFGRRKGH. Residues glutamate 80, glutamate 105, aspartate 132, and aspartate 154 each coordinate S-adenosyl-L-methionine. Aspartate 154 is an active-site residue. Substrate-binding residues include lysine 158 and aspartate 190.

The protein belongs to the class I-like SAM-binding methyltransferase superfamily. TrmB family.

It catalyses the reaction guanosine(46) in tRNA + S-adenosyl-L-methionine = N(7)-methylguanosine(46) in tRNA + S-adenosyl-L-homocysteine. Its pathway is tRNA modification; N(7)-methylguanine-tRNA biosynthesis. Its function is as follows. Catalyzes the formation of N(7)-methylguanine at position 46 (m7G46) in tRNA. In Nitrobacter hamburgensis (strain DSM 10229 / NCIMB 13809 / X14), this protein is tRNA (guanine-N(7)-)-methyltransferase.